The primary structure comprises 69 residues: DNA gyrase inhibitor YacG (69 aa).

Zn(2+) contacts are provided by Cys12, Cys15, Cys31, and Cys35. The tract at residues 49–69 (RVPVEPKPDEGETPDQAERPQ) is disordered.

This sequence belongs to the DNA gyrase inhibitor YacG family. Interacts with GyrB. It depends on Zn(2+) as a cofactor.

Its function is as follows. Inhibits all the catalytic activities of DNA gyrase by preventing its interaction with DNA. Acts by binding directly to the C-terminal domain of GyrB, which probably disrupts DNA binding by the gyrase. In Thiobacillus denitrificans (strain ATCC 25259 / T1), this protein is DNA gyrase inhibitor YacG.